A 201-amino-acid chain; its full sequence is Protein LIGHT-DEPENDENT SHORT HYPOCOTYLS 2 (201 aa).

Residues 1–14 are compositionally biased toward polar residues; the sequence is MDLISQNHNNRNPN. 2 disordered regions span residues 1–37 and 151–201; these read MDLISQNHNNRNPNTSLSTQTPSSFSSPPSSSRYENQ and SRGV…GATQ. A compositionally biased stretch (low complexity) spans 15–32; that stretch reads TSLSTQTPSSFSSPPSSS. The region spanning 33–160 is the ALOG domain; that stretch reads RYENQKRRDW…SRGVSYEKKR (128 aa). The Nuclear localization signal signature appears at 158-162; the sequence is KKRKR.

This sequence belongs to the plant homeotic and developmental regulators ALOG protein family.

The protein localises to the nucleus. Functionally, probable transcription regulator that acts as a developmental regulator by promoting cell growth in response to light. This is Protein LIGHT-DEPENDENT SHORT HYPOCOTYLS 2 (LSH2) from Arabidopsis thaliana (Mouse-ear cress).